Here is a 711-residue protein sequence, read N- to C-terminus: Zinc finger CCCH domain-containing protein 43 (711 aa).

Residues 1–49 (MPQDDDWFWGRPTPVVVGDGETTSKPKPPVAGKTKKVEEQHPRRPGEPD) form a disordered region. Residues 35–47 (KKVEEQHPRRPGE) are compositionally biased toward basic and acidic residues. 3 consecutive C3H1-type zinc fingers follow at residues 44-72 (RPGE…HPDP), 90-118 (RPGE…HPPR), and 157-185 (RPGT…HPDP). The region spanning 384–637 (LKTLKSILNT…GAISYLIEKE (254 aa)) is the MIF4G domain.

This is Zinc finger CCCH domain-containing protein 43 from Oryza sativa subsp. japonica (Rice).